The chain runs to 88 residues: Small ribosomal subunit protein bS20 (88 aa).

Residues 1-20 form a disordered region; that stretch reads MANTAQARKRARQAVVQNAH.

The protein belongs to the bacterial ribosomal protein bS20 family.

Functionally, binds directly to 16S ribosomal RNA. This chain is Small ribosomal subunit protein bS20, found in Ralstonia pickettii (strain 12J).